We begin with the raw amino-acid sequence, 515 residues long: Cytochrome P450 705A22 (515 aa).

The helical transmembrane segment at 9–29 (FQNCFIFILIFLLTFLCFFFF) threads the bilayer. A heme-binding site is contributed by cysteine 454.

It belongs to the cytochrome P450 family. The cofactor is heme.

It localises to the membrane. Its function is as follows. Plays a role in the gravitropic response of the inflorescence stems and roots. May affect the synthesis of flavonols that have a role in regulating auxin transport. This is Cytochrome P450 705A22 from Arabidopsis thaliana (Mouse-ear cress).